Here is a 386-residue protein sequence, read N- to C-terminus: MNIHEYQAKEILRSYGVSVPNGRVAFTVDEAVEAAKELGAPVCVVKAQIHAGGRGKAGGVKVAKSLEEVRTYASELLGKVLVTHQTGPEGKEVKRLLIEEGCDIQKEYYIGLVVDRATSRVVLMGSEEGGTEIEEVAAKTPEKIFKEYIDPAVGLQAFQARRLAFNINIPKHLVNQAVKFMMGLYQVFVDKDCSIAEINPLVVTGDGKVMALDAKLNFDSNALYRHPDILEYRDLDEEDPKEVEASKYDLNYIALDGNIGCMVNGAGLAMATMDIIKYYGGEPANFLDVGGGASEEKVREAFKIILSDPNVKGIFVNIFGGIMKCDVIASGIVAATKQVGLTLPLVVRLEGTNVELGKKILQESGLNIIAAESMADGAQKIVELVR.

Positions 9–244 (KEILRSYGVS…LDEEDPKEVE (236 aa)) constitute an ATP-grasp domain. Residues lysine 46, 53 to 55 (GRG), glutamate 99, cysteine 102, and glutamate 107 each bind ATP. Residues asparagine 199 and aspartate 213 each coordinate Mg(2+). Substrate is bound by residues asparagine 264 and 321–323 (GIM).

It belongs to the succinate/malate CoA ligase beta subunit family. Heterotetramer of two alpha and two beta subunits. Mg(2+) is required as a cofactor.

The enzyme catalyses succinate + ATP + CoA = succinyl-CoA + ADP + phosphate. It carries out the reaction GTP + succinate + CoA = succinyl-CoA + GDP + phosphate. It participates in carbohydrate metabolism; tricarboxylic acid cycle; succinate from succinyl-CoA (ligase route): step 1/1. Succinyl-CoA synthetase functions in the citric acid cycle (TCA), coupling the hydrolysis of succinyl-CoA to the synthesis of either ATP or GTP and thus represents the only step of substrate-level phosphorylation in the TCA. The beta subunit provides nucleotide specificity of the enzyme and binds the substrate succinate, while the binding sites for coenzyme A and phosphate are found in the alpha subunit. The protein is Succinate--CoA ligase [ADP-forming] subunit beta of Geobacillus kaustophilus (strain HTA426).